Consider the following 183-residue polypeptide: ATP synthase subunit delta (183 aa).

This sequence belongs to the ATPase delta chain family. F-type ATPases have 2 components, F(1) - the catalytic core - and F(0) - the membrane proton channel. F(1) has five subunits: alpha(3), beta(3), gamma(1), delta(1), epsilon(1). F(0) has three main subunits: a(1), b(2) and c(10-14). The alpha and beta chains form an alternating ring which encloses part of the gamma chain. F(1) is attached to F(0) by a central stalk formed by the gamma and epsilon chains, while a peripheral stalk is formed by the delta and b chains.

It localises to the cell membrane. Its function is as follows. F(1)F(0) ATP synthase produces ATP from ADP in the presence of a proton or sodium gradient. F-type ATPases consist of two structural domains, F(1) containing the extramembraneous catalytic core and F(0) containing the membrane proton channel, linked together by a central stalk and a peripheral stalk. During catalysis, ATP synthesis in the catalytic domain of F(1) is coupled via a rotary mechanism of the central stalk subunits to proton translocation. This protein is part of the stalk that links CF(0) to CF(1). It either transmits conformational changes from CF(0) to CF(1) or is implicated in proton conduction. The sequence is that of ATP synthase subunit delta from Oenococcus oeni (strain ATCC BAA-331 / PSU-1).